The following is a 159-amino-acid chain: Cytochrome c nitrite reductase subunit NrfH (159 aa).

At 2-14 the chain is on the cytoplasmic side; sequence SEEKSRNGPARLK. The chain crosses the membrane as a helical; Signal-anchor for type II membrane protein span at residues 15–33; it reads LVLGGATLGVVALATVAFG. The Periplasmic segment spans residues 34 to 159; it reads MKYTDQRPFC…PISTREVADE (126 aa). Cys-43, Cys-46, Met-49, His-61, and Cys-66 together coordinate heme. An a menaquinol-binding site is contributed by Asn-67. Residues Cys-69 and His-70 each coordinate heme. A menaquinol-binding residues include Lys-82 and Asp-89. Asp-89 is a heme binding site. Positions 99-100 are interaction with NrfA; the sequence is GD. Positions 116, 119, 120, 136, 139, 140, and 145 each coordinate heme. An interaction with NrfA region spans residues 123–158; that stretch reads TNVEVASMEAKKYCTDCHRNVQHMRMKPISTREVAD.

This sequence belongs to the NapC/NirT/NrfH family. Component of the NrfHA cytochrome c nitrite reductase complex composed of 4 NrfA catalytic subunits and 2 NrfH quinone-binding subunits. Interacts with NrfA homodimer. Heme is required as a cofactor.

It localises to the cell inner membrane. Functionally, electron donor subunit of the cytochrome c nitrite reductase holocomplex NrfHA. Acquires electrons from the menaquinone pool and mediates their transfer to the catalytic subunit NrfA in an anaerobic respiratory process of nitrite. The other biological function of the NrfHA holocomplex is to detoxify nitrite. This function is essential for the survival of this organism as it enables it to overcome inhibition by nitrite, which is produced by other organisms living in the same environment. The sequence is that of Cytochrome c nitrite reductase subunit NrfH from Nitratidesulfovibrio vulgaris (strain ATCC 29579 / DSM 644 / CCUG 34227 / NCIMB 8303 / VKM B-1760 / Hildenborough) (Desulfovibrio vulgaris).